A 431-amino-acid polypeptide reads, in one-letter code: Transposase for insertion sequence element IS232 (431 aa).

In terms of domain architecture, HTH IS21-type spans 20 to 79 (PNFKKLMGNLKMKINKSQLARELNVDRRTIDKYLNGFTPKGTKNKTSKIDTYYEVIAALL). The H-T-H motif DNA-binding region spans 35-54 (KSQLARELNVDRRTIDKYLN). An Integrase catalytic domain is found at 140-315 (YETPPGEQAQ…IPVFALKQEK (176 aa)).

This sequence belongs to the transposase IS21/IS408/IS1162 family.

Involved in the transposition of the insertion sequence. The chain is Transposase for insertion sequence element IS232 from Bacillus thuringiensis subsp. berliner.